The sequence spans 329 residues: MQHLNELVEKAKLAIESIQDKSLTALDEIRVEYFGKKGHFTQLMQELRNVSAEERPAMGAKINEAKQAALEFLNAKKTEWEQAELNSKLEKERVDVSLPGRKVETGGLHPVTMTINRVTKFFSELGFSVENGPEIESDYYNFDALNIPKHHPARADHDTFWFNPELLLRTQTSGVQIRTMEKMQPPIRIMAPGRVYRNDYDQTHTPMFHQIELLYVDKKANFTELKGLLHDFLRAFFEEDLQVRFRPSYFPFTEPSAEVDVMGKNGKWLEVLGCGMVHPNVLRNVGIDPNEYSGFAVGMGVERLTMLRYNVTDLRSFFENDLRFLKQFK.

Glu-254 contacts Mg(2+).

The protein belongs to the class-II aminoacyl-tRNA synthetase family. Phe-tRNA synthetase alpha subunit type 1 subfamily. As to quaternary structure, tetramer of two alpha and two beta subunits. Requires Mg(2+) as cofactor.

It is found in the cytoplasm. The catalysed reaction is tRNA(Phe) + L-phenylalanine + ATP = L-phenylalanyl-tRNA(Phe) + AMP + diphosphate + H(+). In Haemophilus influenzae (strain ATCC 51907 / DSM 11121 / KW20 / Rd), this protein is Phenylalanine--tRNA ligase alpha subunit (pheS).